A 25-amino-acid polypeptide reads, in one-letter code: QGCCGEPNLCFTRWCRNNARCCRQQ.

Gln1 carries the pyrrolidone carboxylic acid; partial modification. Cystine bridges form between Cys3-Cys15, Cys4-Cys21, and Cys10-Cys22.

The protein belongs to the conotoxin M superfamily. As to expression, expressed by the venom duct.

Its subcellular location is the secreted. In terms of biological role, mu-conotoxins block voltage-gated sodium channels (Nav). This synthetic toxin blocks slightly but irreversibly tetrodotoxin-resistant VGSCs. The chain is Mu-conotoxin CnIIIB from Conus consors (Singed cone).